The sequence spans 524 residues: Beta-glucosidase 21 (524 aa).

An N-terminal signal peptide occupies residues 1-24; it reads MALQKFPLMGLLLLLTILVSVTTA. An a beta-D-glucoside-binding site is contributed by Gln-55. N-linked (GlcNAc...) asparagine glycosylation occurs at Asn-61. A beta-D-glucoside-binding positions include His-158 and 203 to 204; that span reads NE. The active-site Proton donor is the Glu-204. Cys-223 and Cys-230 are oxidised to a cystine. A beta-D-glucoside is bound by residues Tyr-346, Glu-418, Trp-468, 475–476, and Phe-484; that span reads EW. Glu-418 acts as the Nucleophile in catalysis. Asn-494 carries an N-linked (GlcNAc...) asparagine glycan. Positions 521-524 match the Prevents secretion from ER motif; sequence RDEL.

Belongs to the glycosyl hydrolase 1 family. In terms of assembly, component of the PYK10 complex, at least composed of PYK10/BGLU23, BGLU21, BGLU22, JAL22, JAL23, PBP1/JAL30, PBP2/JAL31, JAL32, JAL33, JAL34, JAL35, GLL22 and GLL23. As to expression, expressed exclusively in roots.

The protein resides in the endoplasmic reticulum lumen. It catalyses the reaction Hydrolysis of terminal, non-reducing beta-D-glucosyl residues with release of beta-D-glucose.. With respect to regulation, activated upon binding to PBP1 or PBP2. Beta-D-glucosidase active on scopolin &gt;&gt; esculin &gt;&gt; 4-MU-glucoside &gt; DIMBOA-glucoside. No activity with pNP-glucoside, oNP-glucoside and sinigrin as substrates. The protein is Beta-glucosidase 21 of Arabidopsis thaliana (Mouse-ear cress).